We begin with the raw amino-acid sequence, 370 residues long: Heme A synthase (370 aa).

8 helical membrane-spanning segments follow: residues 15–35, 104–124, 129–149, 161–181, 200–220, 261–280, 293–313, and 317–337; these read VRIW…VGGA, VIGI…AIGP, ALWI…WMVA, VRLA…VWTL, ALAL…VAGL, QFDH…LHMI, GAVL…FTVL, and PIDL…LAVL. His-264 contacts heme. A heme-binding site is contributed by His-324.

Belongs to the COX15/CtaA family. Type 2 subfamily. In terms of assembly, interacts with CtaB. Requires heme b as cofactor.

The protein localises to the cell membrane. It carries out the reaction Fe(II)-heme o + 2 A + H2O = Fe(II)-heme a + 2 AH2. It functions in the pathway porphyrin-containing compound metabolism; heme A biosynthesis; heme A from heme O: step 1/1. In terms of biological role, catalyzes the conversion of heme O to heme A by two successive hydroxylations of the methyl group at C8. The first hydroxylation forms heme I, the second hydroxylation results in an unstable dihydroxymethyl group, which spontaneously dehydrates, resulting in the formyl group of heme A. In Rhodopseudomonas palustris (strain TIE-1), this protein is Heme A synthase.